We begin with the raw amino-acid sequence, 862 residues long: DNA replication licensing factor MCM4 (862 aa).

Gly residues predominate over residues 1 to 12 (MASRGGGGGGDG). Residues 1 to 132 (MASRGGGGGG…GGGGGGAGAD (132 aa)) are disordered. Composition is skewed to low complexity over residues 20-41 (SSPDVRPSSPLPATNSSPPQSG) and 52-64 (SASPYPSSPSLGG). A C4-type zinc finger spans residues 289 to 317 (CLVCGFYSEPVMVDRGRVTEPHICQKEQC). Residues 453–659 (IYDRLTRSLA…QTDRRLAKHI (207 aa)) form the MCM domain. An ATP-binding site is contributed by 503-510 (GDPGTSKS). Residues 635–638 (SRFD) carry the Arginine finger motif.

It belongs to the MCM family. Component of the minichromosome maintenance (MCM) complex, a heterotetramer composed of MCM2, MCM3, MCM4, MCM5, MCM6 and MCM7.

The protein resides in the nucleus. It catalyses the reaction ATP + H2O = ADP + phosphate + H(+). Its function is as follows. Probable component of the MCM2-7 complex (MCM complex) that may function as a DNA helicase and which is essential to undergo a single round of replication initiation and elongation per cell cycle in eukaryotic cells. This chain is DNA replication licensing factor MCM4 (MCM4), found in Oryza sativa subsp. japonica (Rice).